A 93-amino-acid chain; its full sequence is Small ribosomal subunit protein uS19 (93 aa).

Belongs to the universal ribosomal protein uS19 family.

Its function is as follows. Protein S19 forms a complex with S13 that binds strongly to the 16S ribosomal RNA. The polypeptide is Small ribosomal subunit protein uS19 (Renibacterium salmoninarum (strain ATCC 33209 / DSM 20767 / JCM 11484 / NBRC 15589 / NCIMB 2235)).